A 582-amino-acid polypeptide reads, in one-letter code: PTS system lactose-specific EIICB component (582 aa).

Residues 8-409 (IEKGKPFFEK…VVDVIIYYPF (402 aa)) form the PTS EIIC type-3 domain. The next 9 helical transmembrane spans lie at 30-50 (GFIA…ITYV), 64-84 (GILM…VAGT), 103-123 (INFI…AADP), 137-157 (KGLL…NFFV), 176-196 (VFKD…LDLL), 222-242 (GWIG…VGIH), 283-303 (FVAT…FMWL), 339-359 (VFFI…KFFV), and 381-401 (IVMG…LIVV). The tract at residues 453–473 (ASEADTDDTSSVDETTSTSST) is disordered. Positions 464–473 (VDETTSTSST) are enriched in low complexity. Residues 479 to 582 (QTNVLVLCAG…LEFVKQQFNN (104 aa)) enclose the PTS EIIB type-3 domain. C486 acts as the Phosphocysteine intermediate; for EIIB activity in catalysis. C486 is subject to Phosphocysteine; by EIIA.

It localises to the cell membrane. The enzyme catalyses lactose(out) + N(pros)-phospho-L-histidyl-[protein] = lactose 6-phosphate(in) + L-histidyl-[protein]. Its function is as follows. The phosphoenolpyruvate-dependent sugar phosphotransferase system (sugar PTS), a major carbohydrate active transport system, catalyzes the phosphorylation of incoming sugar substrates concomitantly with their translocation across the cell membrane. The enzyme II LacEF PTS system is involved in lactose transport. This is PTS system lactose-specific EIICB component from Staphylococcus epidermidis (strain ATCC 35984 / DSM 28319 / BCRC 17069 / CCUG 31568 / BM 3577 / RP62A).